We begin with the raw amino-acid sequence, 343 residues long: Heat-inducible transcription repressor HrcA (343 aa).

The protein belongs to the HrcA family.

Negative regulator of class I heat shock genes (grpE-dnaK-dnaJ and groELS operons). Prevents heat-shock induction of these operons. The sequence is that of Heat-inducible transcription repressor HrcA from Thermobifida fusca (strain YX).